Consider the following 589-residue polypeptide: Protein POF1B (589 aa).

Positions 334–443 (TFSNIREELG…QNLRMQVSET (110 aa)) form a coiled coil.

Interacts with nonmuscle actin.

The protein resides in the cell junction. The protein localises to the tight junction. In terms of biological role, plays a key role in the organization of epithelial monolayers by regulating the actin cytoskeleton. May be involved in ovary development. This chain is Protein POF1B (POF1B), found in Homo sapiens (Human).